The sequence spans 152 residues: Deoxyuridine 5'-triphosphate nucleotidohydrolase (152 aa).

Substrate contacts are provided by residues 72 to 74 (RSG), asparagine 85, and 89 to 91 (TVD).

This sequence belongs to the dUTPase family. Requires Mg(2+) as cofactor.

It carries out the reaction dUTP + H2O = dUMP + diphosphate + H(+). The protein operates within pyrimidine metabolism; dUMP biosynthesis; dUMP from dCTP (dUTP route): step 2/2. Functionally, this enzyme is involved in nucleotide metabolism: it produces dUMP, the immediate precursor of thymidine nucleotides and it decreases the intracellular concentration of dUTP so that uracil cannot be incorporated into DNA. In Nitrobacter hamburgensis (strain DSM 10229 / NCIMB 13809 / X14), this protein is Deoxyuridine 5'-triphosphate nucleotidohydrolase.